The chain runs to 293 residues: Lipoyl synthase (293 aa).

Positions 38, 43, 49, 64, 68, 71, and 277 each coordinate [4Fe-4S] cluster. A Radical SAM core domain is found at 50 to 266 (WSRGTATFLL…STIAKNAGIR (217 aa)).

It belongs to the radical SAM superfamily. Lipoyl synthase family. The cofactor is [4Fe-4S] cluster.

Its subcellular location is the cytoplasm. It carries out the reaction [[Fe-S] cluster scaffold protein carrying a second [4Fe-4S](2+) cluster] + N(6)-octanoyl-L-lysyl-[protein] + 2 oxidized [2Fe-2S]-[ferredoxin] + 2 S-adenosyl-L-methionine + 4 H(+) = [[Fe-S] cluster scaffold protein] + N(6)-[(R)-dihydrolipoyl]-L-lysyl-[protein] + 4 Fe(3+) + 2 hydrogen sulfide + 2 5'-deoxyadenosine + 2 L-methionine + 2 reduced [2Fe-2S]-[ferredoxin]. It participates in protein modification; protein lipoylation via endogenous pathway; protein N(6)-(lipoyl)lysine from octanoyl-[acyl-carrier-protein]: step 2/2. Catalyzes the radical-mediated insertion of two sulfur atoms into the C-6 and C-8 positions of the octanoyl moiety bound to the lipoyl domains of lipoate-dependent enzymes, thereby converting the octanoylated domains into lipoylated derivatives. This chain is Lipoyl synthase, found in Chlorobium chlorochromatii (strain CaD3).